Consider the following 129-residue polypeptide: Small ribosomal subunit protein uS11 (129 aa).

It belongs to the universal ribosomal protein uS11 family. Part of the 30S ribosomal subunit. Interacts with proteins S7 and S18. Binds to IF-3.

Located on the platform of the 30S subunit, it bridges several disparate RNA helices of the 16S rRNA. Forms part of the Shine-Dalgarno cleft in the 70S ribosome. The sequence is that of Small ribosomal subunit protein uS11 from Bradyrhizobium sp. (strain ORS 278).